A 182-amino-acid polypeptide reads, in one-letter code: Protein Syd (182 aa).

Belongs to the Syd family.

Its subcellular location is the cell inner membrane. Its function is as follows. Interacts with the SecY protein in vivo. May bind preferentially to an uncomplexed state of SecY, thus functioning either as a chelating agent for excess SecY in the cell or as a regulatory factor that negatively controls the translocase function. The protein is Protein Syd of Aliivibrio salmonicida (strain LFI1238) (Vibrio salmonicida (strain LFI1238)).